We begin with the raw amino-acid sequence, 425 residues long: Histidine--tRNA ligase (425 aa).

It belongs to the class-II aminoacyl-tRNA synthetase family. As to quaternary structure, homodimer.

It localises to the cytoplasm. The enzyme catalyses tRNA(His) + L-histidine + ATP = L-histidyl-tRNA(His) + AMP + diphosphate + H(+). The sequence is that of Histidine--tRNA ligase from Buchnera aphidicola subsp. Baizongia pistaciae (strain Bp).